Here is a 324-residue protein sequence, read N- to C-terminus: tRNA dimethylallyltransferase (324 aa).

20 to 27 (GPTASGKS) contributes to the ATP binding site. Residue 22–27 (TASGKS) coordinates substrate. Interaction with substrate tRNA regions lie at residues 45–48 (DSAL), 168–172 (QRLIR), and 284–291 (KRQITWLR).

Belongs to the IPP transferase family. As to quaternary structure, monomer. It depends on Mg(2+) as a cofactor.

The enzyme catalyses adenosine(37) in tRNA + dimethylallyl diphosphate = N(6)-dimethylallyladenosine(37) in tRNA + diphosphate. Its function is as follows. Catalyzes the transfer of a dimethylallyl group onto the adenine at position 37 in tRNAs that read codons beginning with uridine, leading to the formation of N6-(dimethylallyl)adenosine (i(6)A). This Hydrogenovibrio crunogenus (strain DSM 25203 / XCL-2) (Thiomicrospira crunogena) protein is tRNA dimethylallyltransferase.